The chain runs to 186 residues: Der GTPase-activating protein YihI (186 aa).

The segment at 39 to 77 is disordered; the sequence is LDAKAREDKKKRKHKGLASGSRHSAVEEKANKLQNEIKD. Basic and acidic residues predominate over residues 62–77; sequence SAVEEKANKLQNEIKD.

It belongs to the YihI family. In terms of assembly, interacts with Der.

Its function is as follows. A GTPase-activating protein (GAP) that modifies Der/EngA GTPase function. May play a role in ribosome biogenesis. The polypeptide is Der GTPase-activating protein YihI (Haemophilus influenzae (strain 86-028NP)).